Here is a 421-residue protein sequence, read N- to C-terminus: MDLENKVKKMGLGHEQGFGAPCLKCKEKCEGFELHFWRKICRNCKCGQEEHDVLLSNEEDRKVGKLFEDTKYTTLIAKLKSDGIPMYKRNVMILTNPVAAKKNVSINTVTYEWAPPVQNQALARQYMQMLPKEKQPVAGSEGAQYRKKQLAKQLPAHDQDPSKCHELSPREVKEMEQFVKKYKSEALGVGDVKLPCEMDAQGPKQMNIPGGDRSTPAAVGAMEDKSAEHKRTQYSCYCCKLSMKEGDPAIYAERAGYDKLWHPACFVCSTCHELLVDMIYFWKNEKLYCGRHYCDSEKPRCAGCDELIFSNEYTQAENQNWHLKHFCCFDCDSILAGEIYVMVNDKPVCKPCYVKNHAVVCQGCHNAIDPEVQRVTYNNFSWHASTECFLCSCCSKCLIGQKFMPVEGMVFCSVECKKMMS.

A PET domain is found at 92–199 (MILTNPVAAK…GDVKLPCEMD (108 aa)). The interval 133-164 (EKQPVAGSEGAQYRKKQLAKQLPAHDQDPSKC) is disordered. Basic and acidic residues predominate over residues 155-164 (PAHDQDPSKC). LIM zinc-binding domains lie at 234–297 (YSCY…CDSE), 299–359 (PRCA…NHAV), and 362–421 (QGCH…KMMS).

It belongs to the prickle / espinas / testin family. Interacts via LIM domain 1 with ZYX. Interacts (via LIM domain 3) with ENAH and VASP. Interacts with ALKBH4, talin, actin, alpha-actinin, GRIP1 and PXN. Interacts (via LIM domain 2) with ACTL7A (via N-terminus). Heterodimer with ACTL7A; the heterodimer interacts with ENAH to form a heterotrimer.

The protein localises to the cytoplasm. Its subcellular location is the cell junction. It is found in the focal adhesion. Its function is as follows. Scaffold protein that may play a role in cell adhesion, cell spreading and in the reorganization of the actin cytoskeleton. Plays a role in the regulation of cell proliferation. May act as a tumor suppressor. In Colobus guereza (Mantled guereza), this protein is Testin (TES).